A 49-amino-acid chain; its full sequence is Large ribosomal subunit protein bL32 (49 aa).

This sequence belongs to the bacterial ribosomal protein bL32 family.

The protein is Large ribosomal subunit protein bL32 of Nautilia profundicola (strain ATCC BAA-1463 / DSM 18972 / AmH).